The primary structure comprises 276 residues: MSYGPLDMYRNPGPSGPQLRDFSSIIQTCSGNIQRISQATAQIKNLMSQLGTKQDSSKLQENLQQLQHSTNQLAKETNELLKELGSLPLPLSTSEQRQQRLQKERLMNDFSAALNNFQAVQRRVSEKEKESIARARAGSRLSAEERQREEQLVSFDSHEEWNQMQSQEDEVAITEQDLELIKERETAIRQLEADILDVNQIFKDLAMMIHDQGDLIDSIEANVESSEVHVERATEQLQRAAYYQKKSRKKMCILVLVLSVIILILGLIIWLVYKTK.

Ser-2 is subject to N-acetylserine. The Cytoplasmic segment spans residues 2–248 (SYGPLDMYRN…RAAYYQKKSR (247 aa)). A coiled-coil region spans residues 33–131 (IQRISQATAQ…RRVSEKEKES (99 aa)). Phosphoserine is present on residues Ser-139, Ser-142, Ser-218, and Ser-225. Residues 178–240 (LELIKERETA…ERATEQLQRA (63 aa)) form the t-SNARE coiled-coil homology domain. Residues 249-269 (KKMCILVLVLSVIILILGLII) traverse the membrane as a helical; Anchor for type IV membrane protein segment. The Vesicular portion of the chain corresponds to 270–276 (WLVYKTK).

Belongs to the syntaxin family. As to quaternary structure, interacts with NAPA and SNAP23. Identified in a complex containing STX6, STX12, VAMP4 and VTI1A. Associates with the BLOC-1 complex. Interacts with BLOC1S6. Interacts with GRIPAP1. Forms a complex with GRIP1, GRIA2 and NSG1; controls the intracellular fate of AMPAR and the endosomal sorting of the GRIA2 subunit toward recycling and membrane targeting. Interacts with NSG1. Interacts with TPC1. Interacts (via N-terminus) with VPS13B.

It localises to the endosome membrane. The protein resides in the golgi apparatus membrane. The protein localises to the endomembrane system. It is found in the early endosome membrane. Its subcellular location is the recycling endosome membrane. Functionally, SNARE promoting fusion of transport vesicles with target membranes. Together with SNARE STX6, promotes movement of vesicles from endosomes to the cell membrane, and may therefore function in the endocytic recycling pathway. Through complex formation with GRIP1, GRIA2 and NSG1 controls the intracellular fate of AMPAR and the endosomal sorting of the GRIA2 subunit toward recycling and membrane targeting. The sequence is that of Syntaxin-12 (STX12) from Homo sapiens (Human).